Reading from the N-terminus, the 122-residue chain is Large ribosomal subunit protein uL14 (122 aa).

This sequence belongs to the universal ribosomal protein uL14 family. As to quaternary structure, part of the 50S ribosomal subunit. Forms a cluster with proteins L3 and L19. In the 70S ribosome, L14 and L19 interact and together make contacts with the 16S rRNA in bridges B5 and B8.

Functionally, binds to 23S rRNA. Forms part of two intersubunit bridges in the 70S ribosome. This Rubrobacter xylanophilus (strain DSM 9941 / JCM 11954 / NBRC 16129 / PRD-1) protein is Large ribosomal subunit protein uL14.